The following is a 151-amino-acid chain: Protein ripply1 (151 aa).

The WRPW motif signature appears at W57–W60. The segment at H96–Y131 is ripply homology domain. The interval L130–K151 is disordered. The segment covering E132–K151 has biased composition (acidic residues).

This sequence belongs to the ripply family.

It localises to the nucleus. In terms of biological role, plays a role in somitogenesis. Essential for transcriptional repression of the segmental patterning genes, thus terminating the segmentation program in the presomitic mesoderm, and also required for the maintenance of rostrocaudal polarity in somites. The chain is Protein ripply1 from Homo sapiens (Human).